The primary structure comprises 101 residues: Small ribosomal subunit protein uS14 (101 aa).

The protein belongs to the universal ribosomal protein uS14 family. Part of the 30S ribosomal subunit. Contacts proteins S3 and S10.

Binds 16S rRNA, required for the assembly of 30S particles and may also be responsible for determining the conformation of the 16S rRNA at the A site. This is Small ribosomal subunit protein uS14 from Nitrosospira multiformis (strain ATCC 25196 / NCIMB 11849 / C 71).